Consider the following 153-residue polypeptide: uncharacterized protein (153 aa).

The signal sequence occupies residues 1–19; that stretch reads MKACLLLFFYFSFICQLHG.

This is an uncharacterized protein from Escherichia coli (strain K12).